Reading from the N-terminus, the 263-residue chain is Syntaxin pep12 (263 aa).

The tract at residues 140 to 159 (RNVSLSNNSSGQRQPLTESK) is disordered. Over residues 142-159 (VSLSNNSSGQRQPLTESK) the composition is skewed to polar residues. Phosphoserine occurs at positions 148 and 163. Positions 169 to 231 (QRLINERQGE…KNASRQLQIA (63 aa)) constitute a t-SNARE coiled-coil homology domain.

This sequence belongs to the syntaxin family.

The protein localises to the endoplasmic reticulum. Functionally, has a role in vesicle-mediated transport but not with protein transport from Golgi to vesicle. The polypeptide is Syntaxin pep12 (pep12) (Schizosaccharomyces pombe (strain 972 / ATCC 24843) (Fission yeast)).